Reading from the N-terminus, the 85-residue chain is Alpha-conotoxin Lt28.1 (85 aa).

The first 21 residues, 1–21 (MPKLEMMLLVLLILPLCYIDA), serve as a signal peptide directing secretion. Positions 22–40 (VGPPPPWNMEDEIIEHWQK) are excised as a propeptide. 4 cysteine pairs are disulfide-bonded: Cys-61-Cys-74, Cys-66-Cys-84, Cys-67-Cys-79, and Cys-72-Cys-81.

It belongs to the conotoxin D superfamily. In terms of tissue distribution, expressed by the venom duct.

Its subcellular location is the secreted. In terms of biological role, alpha-conotoxins act on postsynaptic membranes, they bind to the nicotinic acetylcholine receptors (nAChR) and thus inhibit them. This toxin weakly inhibits alpha-9-alpha-10/CHRNA9-CHRNA10 nAChRs (IC(50)=3 uM). The polypeptide is Alpha-conotoxin Lt28.1 (Conus litteratus (Lettered cone)).